The following is a 167-amino-acid chain: NAD(P)H-quinone oxidoreductase subunit I, chloroplastic (167 aa).

2 consecutive 4Fe-4S ferredoxin-type domains span residues 55 to 84 (GRIHFEFDKCIACEVCVRVCPIDLPVVDWK) and 95 to 124 (LNYSIDFGICIFCGNCVEYCPTNCLSMTEE). [4Fe-4S] cluster contacts are provided by Cys-64, Cys-67, Cys-70, Cys-74, Cys-104, Cys-107, Cys-110, and Cys-114.

Belongs to the complex I 23 kDa subunit family. In terms of assembly, NDH is composed of at least 16 different subunits, 5 of which are encoded in the nucleus. [4Fe-4S] cluster serves as cofactor.

The protein resides in the plastid. It is found in the chloroplast thylakoid membrane. It catalyses the reaction a plastoquinone + NADH + (n+1) H(+)(in) = a plastoquinol + NAD(+) + n H(+)(out). The enzyme catalyses a plastoquinone + NADPH + (n+1) H(+)(in) = a plastoquinol + NADP(+) + n H(+)(out). In terms of biological role, NDH shuttles electrons from NAD(P)H:plastoquinone, via FMN and iron-sulfur (Fe-S) centers, to quinones in the photosynthetic chain and possibly in a chloroplast respiratory chain. The immediate electron acceptor for the enzyme in this species is believed to be plastoquinone. Couples the redox reaction to proton translocation, and thus conserves the redox energy in a proton gradient. This is NAD(P)H-quinone oxidoreductase subunit I, chloroplastic from Panax ginseng (Korean ginseng).